A 655-amino-acid chain; its full sequence is RalA-binding protein 1 (655 aa).

Residues 1–158 (MTECFLPPTS…KKSKDLTAAD (158 aa)) form a disordered region. N-acetylthreonine is present on Thr-2. Polar residues predominate over residues 24 to 33 (LTRTPSSEEI). Phosphoserine is present on residues Ser-29, Ser-30, and Ser-34. Phosphothreonine is present on Thr-44. A phosphoserine mark is found at Ser-48 and Ser-62. Residues 52 to 68 (DILHEPPDVVSDDEKDH) show a composition bias toward basic and acidic residues. Residue 69 to 74 (GKKKGK) coordinates ATP. Basic residues predominate over residues 69 to 79 (GKKKGKFKKKE). Phosphoserine occurs at positions 92 and 93. Residues 102-118 (KMKRSKGIHVFKKPSFS) are compositionally biased toward basic residues. Residues 102–119 (KMKRSKGIHVFKKPSFSK) are nuclear localization signal. Positions 119–155 (KKKEKDFKIKEKPKEEKHKEEKHKEEKHKEKKSKDLT) are enriched in basic and acidic residues. The interval 154–219 (LTAADVVKQW…PAVFRECIDY (66 aa)) is mediates association with membranes and could form transmembrane domains. Residues 192–380 (IPLADAVERT…VVLKQVMKPL (189 aa)) form the Rho-GAP domain. The segment at 403-499 (RRQEFLLNCL…LTEQEELLAM (97 aa)) is mediates interaction with RALA and RALB. Position 418-425 (418-425 (GGIKDLSK)) interacts with ATP. Phosphoserine occurs at positions 461 and 463. The segment at 500 to 655 (EQFLRRQIAS…PSRDRKETSI (156 aa)) is mediates interaction with REPS1 and REPS2. 2 disordered regions span residues 525-551 (QSRQQHGRSETEEYSSESESESEDEEE) and 601-655 (AEQQ…ETSI). The segment covering 536 to 551 (EEYSSESESESEDEEE) has biased composition (acidic residues). The segment covering 624 to 655 (GVLEPKAAKEQPKAGKEPAKPSPSRDRKETSI) has biased composition (basic and acidic residues). At Ser-645 the chain carries Phosphoserine.

Interacts with the GTP-bound form of RALA (via effector domain); during mitosis, recruits RALBP1 to the mitochondrion where it promotes DNM1L phosphorylation and mitochondrial fission. Interacts with DNM1L; mediates its mitotic kinase cyclin B-CDK1-mediated phosphorylation during mitosis to promote mitochondrial fission. Interacts with the mitotic kinase cyclin B-CDK1 during mitosis. Interacts with the GTP-bound form of RALB (via effector domain). Interacts with REPS1; the interaction is direct and does not affect RALA-binding nor GTPase activator activity of RALBP1. Interacts with REPS2; the interaction is direct and does not affect RALA-binding nor GTPase activator activity of RALBP1. Interacts with EPN1, NUMB and TFAP2A during interphase and mitosis. Interacts with AP2M1; as part of the AP2 complex. Interacts with CDC42. Interacts with RAC1. Post-translationally, tyrosine-phosphorylated upon stimulation of cells with EGF. May undergo proteolytic cleavage to give peptides which reassemble to form a transporter complex. Expressed ubiquitously but at low levels. Shows a strong expression in the erythrocytes.

It is found in the cell membrane. It localises to the cytoplasm. The protein localises to the cytosol. Its subcellular location is the cytoskeleton. The protein resides in the spindle pole. It is found in the nucleus. It localises to the mitochondrion. The enzyme catalyses an S-substituted glutathione(in) + ATP + H2O = an S-substituted glutathione(out) + ADP + phosphate + H(+). It carries out the reaction ATP + H2O + xenobioticSide 1 = ADP + phosphate + xenobioticSide 2.. It catalyses the reaction leukotriene C4(in) + ATP + H2O = leukotriene C4(out) + ADP + phosphate + H(+). Functionally, multifunctional protein that functions as a downstream effector of RALA and RALB. As a GTPase-activating protein/GAP can inactivate CDC42 and RAC1 by stimulating their GTPase activity. As part of the Ral signaling pathway, may also regulate ligand-dependent EGF and insulin receptors-mediated endocytosis. During mitosis, may act as a scaffold protein in the phosphorylation of EPSIN/EPN1 by the mitotic kinase cyclin B-CDK1, preventing endocytosis during that phase of the cell cycle. During mitosis, also controls mitochondrial fission as an effector of RALA. Recruited to mitochondrion by RALA, acts as a scaffold to foster the mitotic kinase cyclin B-CDK1-mediated phosphorylation and activation of DNM1L. Its function is as follows. Could also function as a primary ATP-dependent active transporter for glutathione conjugates of electrophiles. May also actively catalyze the efflux of a wide range of substrates including xenobiotics like doxorubicin (DOX) contributing to cell multidrug resistance. The chain is RalA-binding protein 1 from Homo sapiens (Human).